Consider the following 1367-residue polypeptide: Tonsoku-like protein (1367 aa).

TPR repeat units lie at residues A27–V60, A67–L100, Q107–K147, T162–N195, F202–M235, S242–K275, M311–L344, A352–N385, and A390–A424. The interval S460 to E509 is disordered. Residues T465–E509 are compositionally biased toward acidic residues. ANK repeat units follow at residues M528–P557, C561–D590, and D597–L626. Disordered stretches follow at residues M660–P714 and S726–S785. Over residues M666 to N684 the composition is skewed to polar residues. Residues T692–S713 show a composition bias toward pro residues. The segment covering K772 to E781 has biased composition (basic and acidic residues). R797 is modified (omega-N-methylarginine). 2 disordered regions span residues G798–A820 and T841–K910. Positions T844–S857 are enriched in low complexity. The span at A894 to N909 shows a compositional bias: polar residues. LRR repeat units lie at residues H1062–T1086, M1090–Q1118, F1121–S1144, A1181–S1205, G1240–R1263, C1268–A1293, and L1324–Q1347.

Belongs to the Tonsoku family. As to quaternary structure, component of the MMS22L-TONSL complex, a complex at least composed of MMS22L and TONSL/NFKBIL2. Interacts with the MCM complex, the FACT complex and the RPA complex. Interacts with MCM5; the interaction is direct. Binds histones, with a strong preference for histone H3.1 (histones H3.1 and H3-4/H3.1t). Interacts (via ANK repeats) with histone H4; specifically binds histone H4 lacking methylation at 'Lys-20' (H4K20me0). May interact with DNAJC9; the interaction seems to be histone-dependent.

The protein resides in the nucleus. It localises to the chromosome. The protein localises to the cytoplasm. Functionally, component of the MMS22L-TONSL complex, a complex that promotes homologous recombination-mediated repair of double-strand breaks (DSBs) at stalled or collapsed replication forks. The MMS22L-TONSL complex is required to maintain genome integrity during DNA replication. It mediates the assembly of RAD51 filaments on single-stranded DNA (ssDNA): the MMS22L-TONSL complex is recruited to DSBs following histone replacement by histone chaperones and eviction of the replication protein A complex (RPA/RP-A) from DSBs. Following recruitment to DSBs, the TONSL-MMS22L complex promotes recruitment of RAD51 filaments and subsequent homologous recombination. Within the complex, TONSL acts as a histone reader, which recognizes and binds newly synthesized histones following their replacement by histone chaperones. Specifically binds histone H4 lacking methylation at 'Lys-20' (H4K20me0) and histone H3.1. The protein is Tonsoku-like protein of Rattus norvegicus (Rat).